The sequence spans 90 residues: Probable Fe(2+)-trafficking protein (90 aa).

The protein belongs to the Fe(2+)-trafficking protein family. As to quaternary structure, monomer.

In terms of biological role, could be a mediator in iron transactions between iron acquisition and iron-requiring processes, such as synthesis and/or repair of Fe-S clusters in biosynthetic enzymes. The polypeptide is Probable Fe(2+)-trafficking protein (Hamiltonella defensa subsp. Acyrthosiphon pisum (strain 5AT)).